A 309-amino-acid chain; its full sequence is Sulfate adenylyltransferase subunit 2 (309 aa).

The protein belongs to the PAPS reductase family. CysD subfamily. Heterodimer composed of CysD, the smaller subunit, and CysN.

The catalysed reaction is sulfate + ATP + H(+) = adenosine 5'-phosphosulfate + diphosphate. It participates in sulfur metabolism; hydrogen sulfide biosynthesis; sulfite from sulfate: step 1/3. With CysN forms the ATP sulfurylase (ATPS) that catalyzes the adenylation of sulfate producing adenosine 5'-phosphosulfate (APS) and diphosphate, the first enzymatic step in sulfur assimilation pathway. APS synthesis involves the formation of a high-energy phosphoric-sulfuric acid anhydride bond driven by GTP hydrolysis by CysN coupled to ATP hydrolysis by CysD. The polypeptide is Sulfate adenylyltransferase subunit 2 (Methylorubrum populi (strain ATCC BAA-705 / NCIMB 13946 / BJ001) (Methylobacterium populi)).